A 196-amino-acid chain; its full sequence is MAALRRLVSGCGRQLQAFLAGPAATGWLWLPARGLREVVKIQEGKTTVIEGRITETPKATPDPPNPSGQCPICRWNLKHKYTYEDVLLLSQFIRPYGGMLPRRVTGLCREEHRKIEECVKMAHRAGLLPNHRPQLPEGCLPKDKPKLNRYLTRWAPKSVKPIYKKGHRWNKVGMAVGSPLLKDNVCYSRRPLKMMH.

The transit peptide at 1 to 34 directs the protein to the mitochondrion; sequence MAALRRLVSGCGRQLQAFLAGPAATGWLWLPARG.

Belongs to the bacterial ribosomal protein bS18 family. Mitochondrion-specific ribosomal protein mL66 subfamily. In terms of assembly, component of the mitochondrial ribosome small subunit (28S) which comprises a 12S rRNA and about 30 distinct proteins.

Its subcellular location is the mitochondrion. The chain is Large ribosomal subunit protein mL66 (Mrps18a) from Mus musculus (Mouse).